Here is a 1199-residue protein sequence, read N- to C-terminus: Chromosome partition protein Smc (1199 aa).

32–39 is an ATP binding site; it reads PNGSGKSN. Residues 192 to 528 adopt a coiled-coil conformation; that stretch reads GVAEFDEKSE…NARIKTLKDM (337 aa). The region spanning 546–658 is the SMC hinge domain; it reads PGVVDIAGNL…VDNLENAKKL (113 aa). Positions 691 to 1051 form a coiled coil; that stretch reads IKVDIDMKKL…YLQLISEVQK (361 aa).

The protein belongs to the SMC family. In terms of assembly, homodimer.

It localises to the cytoplasm. In terms of biological role, required for chromosome condensation and partitioning. This Methanococcus voltae protein is Chromosome partition protein Smc.